Here is a 527-residue protein sequence, read N- to C-terminus: GMP synthase [glutamine-hydrolyzing] (527 aa).

One can recognise a Glutamine amidotransferase type-1 domain in the interval 11 to 209 (RILILDFGSQ…VLNICGCENL (199 aa)). Residue Cys-88 is the Nucleophile of the active site. Residues His-183 and Glu-185 contribute to the active site. The GMPS ATP-PPase domain maps to 210-402 (WTSANIIEDA…LGLPYNMLYR (193 aa)). ATP is bound at residue 237–243 (SGGVDSS).

Homodimer.

The enzyme catalyses XMP + L-glutamine + ATP + H2O = GMP + L-glutamate + AMP + diphosphate + 2 H(+). It functions in the pathway purine metabolism; GMP biosynthesis; GMP from XMP (L-Gln route): step 1/1. Its function is as follows. Catalyzes the synthesis of GMP from XMP. The polypeptide is GMP synthase [glutamine-hydrolyzing] (Photobacterium profundum (strain SS9)).